A 241-amino-acid chain; its full sequence is Pyridoxine 5'-phosphate synthase (241 aa).

Asparagine 7 is a binding site for 3-amino-2-oxopropyl phosphate. 9–10 (DH) is a binding site for 1-deoxy-D-xylulose 5-phosphate. 3-amino-2-oxopropyl phosphate is bound at residue arginine 18. Histidine 43 functions as the Proton acceptor in the catalytic mechanism. 1-deoxy-D-xylulose 5-phosphate contacts are provided by arginine 45 and histidine 50. Residue glutamate 70 is the Proton acceptor of the active site. Threonine 100 lines the 1-deoxy-D-xylulose 5-phosphate pocket. Histidine 191 serves as the catalytic Proton donor. Residues glycine 192 and 213 to 214 (GH) contribute to the 3-amino-2-oxopropyl phosphate site.

It belongs to the PNP synthase family. As to quaternary structure, homooctamer; tetramer of dimers.

The protein localises to the cytoplasm. The enzyme catalyses 3-amino-2-oxopropyl phosphate + 1-deoxy-D-xylulose 5-phosphate = pyridoxine 5'-phosphate + phosphate + 2 H2O + H(+). It participates in cofactor biosynthesis; pyridoxine 5'-phosphate biosynthesis; pyridoxine 5'-phosphate from D-erythrose 4-phosphate: step 5/5. Catalyzes the complicated ring closure reaction between the two acyclic compounds 1-deoxy-D-xylulose-5-phosphate (DXP) and 3-amino-2-oxopropyl phosphate (1-amino-acetone-3-phosphate or AAP) to form pyridoxine 5'-phosphate (PNP) and inorganic phosphate. The chain is Pyridoxine 5'-phosphate synthase from Nitratidesulfovibrio vulgaris (strain ATCC 29579 / DSM 644 / CCUG 34227 / NCIMB 8303 / VKM B-1760 / Hildenborough) (Desulfovibrio vulgaris).